The sequence spans 81 residues: MASKEEILAGLAEIVNEETGLDTAEVQPEKSFTDDLDIDSISMMTIVVNAEDKFGVKIPDEEVKNLKTVQDAVDFIDGAQA.

In terms of domain architecture, Carrier spans 2-80 (ASKEEILAGL…DAVDFIDGAQ (79 aa)). S40 is subject to O-(pantetheine 4'-phosphoryl)serine.

The protein belongs to the acyl carrier protein (ACP) family. 4'-phosphopantetheine is transferred from CoA to a specific serine of apo-ACP by AcpS. This modification is essential for activity because fatty acids are bound in thioester linkage to the sulfhydryl of the prosthetic group.

It is found in the cytoplasm. It functions in the pathway lipid metabolism; fatty acid biosynthesis. In terms of biological role, carrier of the growing fatty acid chain in fatty acid biosynthesis. The polypeptide is Acyl carrier protein (Micrococcus luteus (strain ATCC 4698 / DSM 20030 / JCM 1464 / CCM 169 / CCUG 5858 / IAM 1056 / NBRC 3333 / NCIMB 9278 / NCTC 2665 / VKM Ac-2230) (Micrococcus lysodeikticus)).